Here is a 296-residue protein sequence, read N- to C-terminus: Small ribosomal subunit protein uS2 (296 aa).

A disordered region spans residues 245-296 (WEAPAAGFAGATGTGWDGAAGDEWGAAPATTEWAASAAPAAASGEAAKETTW). A compositionally biased stretch (low complexity) spans 263–289 (AAGDEWGAAPATTEWAASAAPAAASGE).

Belongs to the universal ribosomal protein uS2 family. Component of the small ribosomal subunit. Mature ribosomes consist of a small (40S) and a large (60S) subunit. The 40S subunit contains about 33 different proteins and 1 molecule of RNA (18S). The 60S subunit contains about 49 different proteins and 3 molecules of RNA (25S, 5.8S and 5S). Interacts with RPS21.

It localises to the cytoplasm. Required for the assembly and/or stability of the 40S ribosomal subunit. Required for the processing of the 20S rRNA-precursor to mature 18S rRNA in a late step of the maturation of 40S ribosomal subunits. The chain is Small ribosomal subunit protein uS2 from Fusarium vanettenii (strain ATCC MYA-4622 / CBS 123669 / FGSC 9596 / NRRL 45880 / 77-13-4) (Fusarium solani subsp. pisi).